Reading from the N-terminus, the 89-residue chain is Small ribosomal subunit protein uS15 (89 aa).

The disordered stretch occupies residues 1–22 (MPLSKEQKQEVMEKYKLHEHDT).

This sequence belongs to the universal ribosomal protein uS15 family. Part of the 30S ribosomal subunit. Forms a bridge to the 50S subunit in the 70S ribosome, contacting the 23S rRNA.

One of the primary rRNA binding proteins, it binds directly to 16S rRNA where it helps nucleate assembly of the platform of the 30S subunit by binding and bridging several RNA helices of the 16S rRNA. Its function is as follows. Forms an intersubunit bridge (bridge B4) with the 23S rRNA of the 50S subunit in the ribosome. In Natranaerobius thermophilus (strain ATCC BAA-1301 / DSM 18059 / JW/NM-WN-LF), this protein is Small ribosomal subunit protein uS15.